A 351-amino-acid polypeptide reads, in one-letter code: MGDPERPEAAGLDQDERSSSDTNENEIKSNEEPLLRKSSRRFVIFPIQYPDIWKMYKQAQASFWTAEEVDLSKDLPHWNKLKADEKYFISHILAFFAASDGIVNENLVERFSQEVQVPEARCFYGFQILIENVHSEMYSLLIDTYIRDPKKREFLFNAIETMPYVKKKADWALRWIADRKSTFGERVVAFAAVEGVFFSGSFAAIFWLKKRGLMPGLTFSNELISRDEGLHCDFACLMFQYLVNKPSEERVREIIVDAVKIEQEFLTEALPVGLIGMNCILMKQYIEFVADRLLVELGFSKVFQAENPFDFMENISLEGKTNFFEKRVSEYQRFAVMAETTDNVFTLDADF.

The interval 1-31 (MGDPERPEAAGLDQDERSSSDTNENEIKSNE) is disordered. Residues Asp100, Glu131, and His134 each coordinate Fe cation. The active site involves Tyr138. Positions 194, 228, and 231 each coordinate Fe cation.

It belongs to the ribonucleoside diphosphate reductase small chain family. Heterotetramer with large (RRM1) subunit. Interacts with p53/TP53. Interacts with RRM1 in response to DNA damage. Fe cation is required as a cofactor.

The protein localises to the cytoplasm. The protein resides in the nucleus. The catalysed reaction is a 2'-deoxyribonucleoside 5'-diphosphate + [thioredoxin]-disulfide + H2O = a ribonucleoside 5'-diphosphate + [thioredoxin]-dithiol. Plays a pivotal role in cell survival by repairing damaged DNA in a p53/TP53-dependent manner. Supplies deoxyribonucleotides for DNA repair in cells arrested at G1 or G2. Contains an iron-tyrosyl free radical center required for catalysis. Forms an active ribonucleotide reductase (RNR) complex with RRM1 which is expressed both in resting and proliferating cells in response to DNA damage. The polypeptide is Ribonucleoside-diphosphate reductase subunit M2 B (RRM2B) (Pongo abelii (Sumatran orangutan)).